Reading from the N-terminus, the 274-residue chain is MANYTAADVKRLRELTGAGMMASKNALVEADGDFDKAVELLRIKGAKDVGKRAERATAEGLVAAKDGALIELNSETDFVAKNAEFQSVADQIVAAAAAAKATDIDALKAAKVGDTTVEQVIADLSAKIGEKLELRRVAYFDGNVETYLHKRAADLPPAVGVLVEYTGDGENGTEAAHAVALQIAALKAKYLTREDVPEDVVANERRIAEETARNEGKPEQALPKIVEGRVTGFYKDVVLLDQPSVSDNKKTVKALLDEAGVTVTRFVRFEVGQA.

Positions 76–79 are involved in Mg(2+) ion dislocation from EF-Tu; sequence TDFV.

The protein belongs to the EF-Ts family.

Its subcellular location is the cytoplasm. Functionally, associates with the EF-Tu.GDP complex and induces the exchange of GDP to GTP. It remains bound to the aminoacyl-tRNA.EF-Tu.GTP complex up to the GTP hydrolysis stage on the ribosome. This is Elongation factor Ts from Mycobacterium sp. (strain JLS).